Here is a 71-residue protein sequence, read N- to C-terminus: Exodeoxyribonuclease 7 small subunit (71 aa).

Belongs to the XseB family. Heterooligomer composed of large and small subunits.

Its subcellular location is the cytoplasm. It catalyses the reaction Exonucleolytic cleavage in either 5'- to 3'- or 3'- to 5'-direction to yield nucleoside 5'-phosphates.. In terms of biological role, bidirectionally degrades single-stranded DNA into large acid-insoluble oligonucleotides, which are then degraded further into small acid-soluble oligonucleotides. In Streptococcus agalactiae serotype Ia (strain ATCC 27591 / A909 / CDC SS700), this protein is Exodeoxyribonuclease 7 small subunit.